The primary structure comprises 62 residues: DNA gyrase inhibitor YacG (62 aa).

The Zn(2+) site is built by Cys8, Cys11, Cys27, and Cys31.

Belongs to the DNA gyrase inhibitor YacG family. Interacts with GyrB. Requires Zn(2+) as cofactor.

Inhibits all the catalytic activities of DNA gyrase by preventing its interaction with DNA. Acts by binding directly to the C-terminal domain of GyrB, which probably disrupts DNA binding by the gyrase. The protein is DNA gyrase inhibitor YacG of Actinobacillus pleuropneumoniae serotype 5b (strain L20).